The following is a 292-amino-acid chain: Acetylglutamate kinase (292 aa).

Substrate is bound by residues 64–65 (GG), Arg-86, and Asn-190.

It belongs to the acetylglutamate kinase family. ArgB subfamily.

It is found in the cytoplasm. It carries out the reaction N-acetyl-L-glutamate + ATP = N-acetyl-L-glutamyl 5-phosphate + ADP. The protein operates within amino-acid biosynthesis; L-arginine biosynthesis; N(2)-acetyl-L-ornithine from L-glutamate: step 2/4. Its function is as follows. Catalyzes the ATP-dependent phosphorylation of N-acetyl-L-glutamate. The chain is Acetylglutamate kinase from Geotalea uraniireducens (strain Rf4) (Geobacter uraniireducens).